The sequence spans 423 residues: MAGKVKWVTDIEKSVLINNFEKRGWVQVTENEDWNFYWMSVQTIRNVFSVEAGYRLSDDQIVNHFPNHYELTRKDLMVKNIKRYRKELEKEGSPLAEKDENGKYLYLDFVPVTYMLPADYNLFVEEFRKSPSSTWIMKPCGKAQGKGIFLINKLSQIKKWSRDSKTSSFVSQSNKEAYVISLYINNPLLIGGRKFDLRLYVLVSTYRPLRCYMYKLGFCRFCTVKYTPSTSELDNMFVHLTNVAIQKHGEDYNHIHGGKWTVSNLRLYLESTRGKEVTSKLFDEIHWIIVQSLKAVAPVMNNDKHCFECYGYDIIIDDKLKPWLIEVNASPSLTSSTANDRILKYNLINDTLNIAVPNGEIPDCKWNKSPPKEVLGNYEILYDEELAQGDGADRELRSRQGQSLGPRAGRSRDSGRAVLTTWK.

In terms of domain architecture, TTL spans 1–367; it reads MAGKVKWVTD…NGEIPDCKWN (367 aa). Residues Lys138, 144 to 145, 181 to 184, and 194 to 196 each bind ATP; these read QG, SLYI, and KFD. Gln144 contacts a protein. Residue Arg220 participates in L-glutamate binding. 241-242 provides a ligand contact to ATP; it reads TN. Lys259 contributes to the L-glutamate binding site. Mg(2+) is bound by residues Asp313, Glu326, and Asn328. Residue Lys344 participates in L-glutamate binding. Positions 391–423 are disordered; that stretch reads GADRELRSRQGQSLGPRAGRSRDSGRAVLTTWK.

The protein belongs to the tubulin polyglutamylase family. In terms of assembly, part of the neuronal tubulin polyglutamylase complex which contains TPGS1, TPGS2, TTLL1, LRRC49 and NICN1. Interacts with PCM1, CSTPP1 and LRRC49. Requires Mg(2+) as cofactor. As to expression, expressed in a wide range of tissues. Has a stronger expression in heart, brain and testis.

The protein localises to the cytoplasm. Its subcellular location is the cytoskeleton. It is found in the cilium basal body. It localises to the cilium axoneme. The protein resides in the cell projection. The protein localises to the cilium. Its subcellular location is the flagellum. The catalysed reaction is (L-glutamyl)(n)-gamma-L-glutamyl-L-glutamyl-[protein] + L-glutamate + ATP = (L-glutamyl)(n+1)-gamma-L-glutamyl-L-glutamyl-[protein] + ADP + phosphate + H(+). In terms of biological role, catalytic subunit of a polyglutamylase complex which modifies tubulin, generating side chains of glutamate on the gamma-carboxyl group of specific glutamate residues within the C-terminal tail of tubulin. Probably involved in the side-chain elongation step of the polyglutamylation reaction rather than the initiation step. Modifies both alpha- and beta-tubulins with a preference for the alpha-tail. Unlike most polyglutamylases of the tubulin--tyrosine ligase family, only displays a catalytic activity when in complex with other proteins as it is most likely lacking domains important for autonomous activity. Part of the neuronal tubulin polyglutamylase complex. Mediates cilia and flagella polyglutamylation which is essential for their biogenesis and motility. Involved in respiratory motile cilia function through the regulation of beating asymmetry. Essential for sperm flagella biogenesis, motility and male fertility. Involved in KLF4 glutamylation which impedes its ubiquitination, thereby leading to somatic cell reprogramming, pluripotency maintenance and embryogenesis. In Homo sapiens (Human), this protein is Polyglutamylase complex subunit TTLL1.